A 132-amino-acid polypeptide reads, in one-letter code: Holo-[acyl-carrier-protein] synthase (132 aa).

Asp-8 and Glu-62 together coordinate Mg(2+).

It belongs to the P-Pant transferase superfamily. AcpS family. It depends on Mg(2+) as a cofactor.

The protein resides in the cytoplasm. The catalysed reaction is apo-[ACP] + CoA = holo-[ACP] + adenosine 3',5'-bisphosphate + H(+). In terms of biological role, transfers the 4'-phosphopantetheine moiety from coenzyme A to a Ser of acyl-carrier-protein. This Leptothrix cholodnii (strain ATCC 51168 / LMG 8142 / SP-6) (Leptothrix discophora (strain SP-6)) protein is Holo-[acyl-carrier-protein] synthase.